Reading from the N-terminus, the 767-residue chain is Actin filament-associated protein 1-like 1 (767 aa).

Over residues 83–97 (LRDMSDDGERSKEAS) the composition is skewed to basic and acidic residues. The disordered stretch occupies residues 83–145 (LRDMSDDGER…KSPEYISSHN (63 aa)). Phosphoserine occurs at positions 87, 93, 97, 103, and 152. Residues 164–173 (SYPTTRMNGE) show a composition bias toward polar residues. The interval 164-210 (SYPTTRMNGESKSSYNDSDAMSSSYESYDEEEEEEKGRQPKHQWPSE) is disordered. The segment covering 174–189 (SKSSYNDSDAMSSSYE) has biased composition (low complexity). The 97-residue stretch at 219–315 (DCRICAFLLR…WLKVIREVSR (97 aa)) folds into the PH 1 domain. Residues Ser328 and Ser342 each carry the phosphoserine modification. The tract at residues 341 to 381 (LSQEKQNSDSDSLGMNDSSSTLSRREACEHGKGKKNSLAEL) is disordered. Residues 349–362 (DSDSLGMNDSSSTL) are compositionally biased toward polar residues. Residues 417–511 (EAPCCGYLNV…WLGLLLVEMG (95 aa)) enclose the PH 2 domain. Tyr556 carries the post-translational modification Phosphotyrosine. The disordered stretch occupies residues 563-605 (KVQDEEPQRPTGAQVKRHASSCSEKSHRADPQVKVKRHASSAN). Over residues 586–595 (EKSHRADPQV) the composition is skewed to basic and acidic residues. Positions 610–700 (GKNRAEEDAR…AVKERLQQSL (91 aa)) form a coiled coil. The segment at 704–767 (PALGLSVSSK…KAKEWEMKKT (64 aa)) is disordered. Over residues 709-733 (SVSSKSKSQETTNKPQSSVPEQSLP) the composition is skewed to polar residues. Ser746 carries the post-translational modification Phosphoserine. Residues 758-767 (KAKEWEMKKT) show a composition bias toward basic and acidic residues.

As to quaternary structure, interacts with CTTN.

The protein localises to the cytoplasm. Its subcellular location is the cell projection. It localises to the podosome. The protein resides in the invadopodium. Its function is as follows. May be involved in podosome and invadosome formation. In Rattus norvegicus (Rat), this protein is Actin filament-associated protein 1-like 1 (Afap1l1).